Reading from the N-terminus, the 95-residue chain is Large ribosomal subunit protein bL25 (95 aa).

It belongs to the bacterial ribosomal protein bL25 family. Part of the 50S ribosomal subunit; part of the 5S rRNA/L5/L18/L25 subcomplex. Contacts the 5S rRNA. Binds to the 5S rRNA independently of L5 and L18.

In terms of biological role, this is one of the proteins that binds to the 5S RNA in the ribosome where it forms part of the central protuberance. The protein is Large ribosomal subunit protein bL25 of Shewanella frigidimarina (strain NCIMB 400).